The chain runs to 47 residues: Large ribosomal subunit protein bL34 (47 aa).

The protein belongs to the bacterial ribosomal protein bL34 family.

The protein is Large ribosomal subunit protein bL34 of Nocardia farcinica (strain IFM 10152).